We begin with the raw amino-acid sequence, 355 residues long: Phosphatidylinositol:ceramide inositolphosphotransferase (355 aa).

The Cytoplasmic segment spans residues 1-44; that stretch reads MISYPFFSLSPPGLVPPPMAVPPVEMYSGSFWNRMRKPLPLRTQ. A helical transmembrane segment spans residues 45–65; that stretch reads VIRFTVVFVIVSFILAVALQI. The Extracellular portion of the chain corresponds to 66-89; sequence THERMPDPKVTKPLPDLGFELLTK. A helical transmembrane segment spans residues 90-110; it reads ISFLSVVTDVLIAFLSSLSFF. Over 111 to 165 the chain is Cytoplasmic; that stretch reads TLWKLYLLHRHCVGSGEPELPCNIPGVSRFFLSVWLCKENCRIELRNVHTIAWIR. The helical transmembrane segment at 166–186 threads the bilayer; sequence FITSYALLLLFRSLVIVMTSM. Over 187-205 the chain is Extracellular; the sequence is PTPVDKCQNPPKIENPVKN. Residues 206–226 traverse the membrane as a helical segment; it reads VILTVLTAGGGSIHCGDLMYS. Residues 227–251 lie on the Cytoplasmic side of the membrane; that stretch reads GHTVILTLHLMFHWIYGAMVHWSFR. Catalysis depends on residues His228, His271, and Asp275. The chain crosses the membrane as a helical span at residues 252-272; that stretch reads PVVTVVAIFGYYCIVASRSHY. The Extracellular segment spans residues 273–275; sequence TDD. A helical membrane pass occupies residues 276–296; that stretch reads VLVAIYLTIATFIAVGHNADG. Over 297-355 the chain is Cytoplasmic; it reads APWQLQLFIRWLPCCGANSREVTEDSQPVMVAFKSEAVDELRERDDSAGLSCEVSTNEV.

This sequence belongs to the sphingomyelin synthase family.

The protein resides in the membrane. Functionally, bidirectional lipid inositolphosphotransferase capable of converting phosphatidylinositol (PI) and ceramide to inositol-phosphorylceramide (IPC) and diacylglycerol (DAG) and vice versa. Direction is dependent on the relative concentrations of DAG and ceramide as phosphoinositol acceptors. Does not function strictly as a SM synthase. Essential for viability of the pathogenic bloodstream stage of this human protozoan parasite and, consequently, can be considered as potential drug target. The polypeptide is Phosphatidylinositol:ceramide inositolphosphotransferase (Trypanosoma brucei brucei (strain 927/4 GUTat10.1)).